Consider the following 129-residue polypeptide: Serum amyloid A-2 protein (129 aa).

Positions Met-1–Ser-18 are cleaved as a signal peptide. A Pyrrolidone carboxylic acid modification is found at Gln-19. The span at Lys-90–Ala-103 shows a compositional bias: basic and acidic residues. The disordered stretch occupies residues Lys-90–Tyr-129.

It belongs to the SAA family. Apolipoprotein of the HDL complex.

Its subcellular location is the secreted. Functionally, major acute phase reactant. The polypeptide is Serum amyloid A-2 protein (Sus scrofa (Pig)).